A 109-amino-acid chain; its full sequence is Biphenyl dioxygenase ferredoxin subunit (109 aa).

Residues 4–100 enclose the Rieske domain; that stretch reads TKACSVDEVP…IRIEGRDVLV (97 aa). The [2Fe-2S] cluster site is built by C43, H45, C63, and H66.

The protein belongs to the bacterial ring-hydroxylating dioxygenase ferredoxin component family. This dioxygenase system consists of four proteins: the two subunits of the hydroxylase component (BphA1 and BphA2), a ferredoxin (BphA3) and a ferredoxin reductase (BphA4).

Its function is as follows. This protein seems to be a 2Fe-2S ferredoxin. In Pseudomonas sp. (strain KKS102), this protein is Biphenyl dioxygenase ferredoxin subunit (bphA3).